Here is a 454-residue protein sequence, read N- to C-terminus: G-protein coupled receptor 39 (454 aa).

Residues 1–34 (MASPSHPSRDCSQVIDHSHVPEFEVATWIKITLI) lie on the Extracellular side of the membrane. Cystine bridges form between Cys-11–Cys-191 and Cys-108–Cys-210. The Zn(2+) site is built by His-17 and His-19. A helical membrane pass occupies residues 35–55 (LVYLVIFVVGILGNSVTIRVT). The Cytoplasmic segment spans residues 56–69 (QVLQKKGYLQKEVT). The helical transmembrane segment at 70–89 (DHMVSLACSDILVFLIGMPM) threads the bilayer. At 90–109 (EFYSIIWNPLTTPSYTVSCK) the chain is on the extracellular side. Residues 110–131 (VHTFLFEACSYATLLHVLTLSF) form a helical membrane-spanning segment. Residues 132 to 151 (ERYIAICHPFRYKAMSGPCQ) lie on the Cytoplasmic side of the membrane. A helical transmembrane segment spans residues 152-172 (VKLLIGFVWVTSALVALPLLF). At 173–217 (AMGVEYPLVNVPSHRGLICNRSRTRHQEQPESSNMSICTNLSSRW) the chain is on the extracellular side. 3 N-linked (GlcNAc...) asparagine glycosylation sites follow: Asn-192, Asn-206, and Asn-212. A helical membrane pass occupies residues 218–242 (TVFQSSIFSAFVVYLVVLVSVAFMC). The Cytoplasmic portion of the chain corresponds to 243 to 283 (WSMMQVLRRSKQGTLAAQGQQLQLRKLESQESRSARRQTII). A helical membrane pass occupies residues 284-305 (FLELIVVTLAVCWMPNQVRRIM). At 306 to 323 (AAAKPKHDWTKSYFRAYM) the chain is on the extracellular side. A helical transmembrane segment spans residues 324–344 (ILLPFSDTFFYLSSVVNPLLY). Residues 345–454 (NVSSQQFRSV…TRNGFQEHEV (110 aa)) are Cytoplasmic-facing. Phosphoserine is present on Ser-397. The disordered stretch occupies residues 415–454 (HSEAKPESKPQELSCESPEPNSERKPANPATRNGFQEHEV).

This sequence belongs to the G-protein coupled receptor 1 family. As to quaternary structure, interacts with HTR1A. Interacts with GALR1. As to expression, detected in liver, kidney, abomasum, uterus, small intestine and colon.

Its subcellular location is the cell membrane. Zinc-sensing receptor that can sense changes in extracellular Zn(2+), mediate Zn(2+) signal transmission, and participates in the regulation of numerous physiological processes including glucose homeostasis regulation, gastrointestinal mobility, hormone secretion and cell death. Activation by Zn(2+) in keratinocytes increases the intracellular concentration of Ca(2+) and activates the ERK/MAPK and PI3K/AKT signaling pathways leading to epithelial repair. Plays an essential role in normal wound healing by inducing the production of cytokines including the major inflammatory cytokine IL6 via the PKC/MAPK/CEBPB pathway. Regulates adipose tissue metabolism, especially lipolysis, and regulates the function of lipases, such as hormone-sensitive lipase and adipose triglyceride lipase. Plays a role in the inhibition of cell death and protects against oxidative, endoplasmic reticulum and mitochondrial stress by inducing secretion of the cytoprotective pigment epithelium-derived growth factor (PEDF) and probably other protective transcripts in a GNA13/RHOA/SRE-dependent manner. Forms dynamic heteroreceptor complexes with HTR1A and GALR1 depending on cell type or specific physiological states, resulting in signaling diversity: HTR1A-GPR39 shows additive increase in signaling along the serum response element (SRE) and NF-kappa-B pathways while GALR1 acts as an antagonist blocking SRE. This Bos taurus (Bovine) protein is G-protein coupled receptor 39 (GPR39).